Consider the following 263-residue polypeptide: MSNASLLSTEAAAALLKAATADGRSIAPLRDRLAIADQDSAYAVQEINTRAWLAEGRRLVGRKIGLTSLAVQAQLGVDQPDFGMLFADMAVGDGEIVAAGRLIQPKVEAEVALILGRDLTQERHTYADLIRATEYAVPSIEIVDSRIENWNIKFVDTVADNASSGLFVLGGRPVRLSDIDLTACAMEMKRGDEIVSRGNGRACLGSPLNAAIWLADMMVRCGRPLQAGDIVLTGALGPMVAVKSGDRFDVSIDGLGNVSALFA.

Belongs to the hydratase/decarboxylase family. MhpD subfamily. It depends on a divalent metal cation as a cofactor.

It catalyses the reaction (S)-4-hydroxy-2-oxopentanoate = (2Z)-2-hydroxypenta-2,4-dienoate + H2O. Its pathway is aromatic compound metabolism; 3-phenylpropanoate degradation. Catalyzes the conversion of 2-hydroxypentadienoic acid (enolic form of 2-oxopent-4-enoate) to 4-hydroxy-2-ketopentanoic acid. The sequence is that of 2-keto-4-pentenoate hydratase 1 from Dechloromonas aromatica (strain RCB).